A 153-amino-acid polypeptide reads, in one-letter code: Peptidoglycan-associated lipoprotein (153 aa).

The first 19 residues, 1-19 (MNKFVKSLLVAGSVAALAA), serve as a signal peptide directing secretion. Cys-20 carries the N-palmitoyl cysteine lipid modification. Residue Cys-20 is the site of S-diacylglycerol cysteine attachment. The region spanning 40–153 (SVADLQQRYN…SKNRRAVLAY (114 aa)) is the OmpA-like domain. Peptidoglycan binding regions lie at residues 55 to 56 (FD) and 97 to 101 (YNIAL).

Belongs to the Pal lipoprotein family. As to quaternary structure, the Tol-Pal system is composed of five core proteins: the inner membrane proteins TolA, TolQ and TolR, the periplasmic protein TolB and the outer membrane protein Pal. They form a network linking the inner and outer membranes and the peptidoglycan layer.

The protein resides in the cell outer membrane. Functionally, part of the Tol-Pal system, which plays a role in outer membrane invagination during cell division and is important for maintaining outer membrane integrity. The protein is Peptidoglycan-associated lipoprotein of Haemophilus influenzae (strain ATCC 51907 / DSM 11121 / KW20 / Rd).